Reading from the N-terminus, the 250-residue chain is MSILSKIQRTQPLILNLANFVTPQRVADVISFIGASPLMTSEIAELESLVEISDAVVVNIGTISESTYPLFLEACRLANQKAKPLILDPVAVNIPFRASIVKRLSQEVKFNIIRGNSAEIAWFADKKSLNKGIDALESNIDNEHARLAAKKTGTVIIETGKVDIISNGHEEMYVDTDSPLFKINVGCGDMLTAVVGTFAAVSDDLFTAAYEATKFFGEAGMIATKQVQNLPGNFVNSLLDTLYQTTHEIK.

Methionine 39 provides a ligand contact to substrate. Residues arginine 114 and threonine 159 each coordinate ATP. Glycine 186 is a substrate binding site.

This sequence belongs to the Thz kinase family. Mg(2+) is required as a cofactor.

It catalyses the reaction 5-(2-hydroxyethyl)-4-methylthiazole + ATP = 4-methyl-5-(2-phosphooxyethyl)-thiazole + ADP + H(+). It participates in cofactor biosynthesis; thiamine diphosphate biosynthesis; 4-methyl-5-(2-phosphoethyl)-thiazole from 5-(2-hydroxyethyl)-4-methylthiazole: step 1/1. In terms of biological role, catalyzes the phosphorylation of the hydroxyl group of 4-methyl-5-beta-hydroxyethylthiazole (THZ). The polypeptide is Hydroxyethylthiazole kinase (Lactococcus lactis subsp. cremoris (strain MG1363)).